We begin with the raw amino-acid sequence, 1350 residues long: uncharacterized protein (1350 aa).

Disordered stretches follow at residues S348–S371 and S923–G944. Residues S923–A932 show a composition bias toward basic and acidic residues.

This is an uncharacterized protein from Ictalurid herpesvirus 1 (strain Auburn) (IcHV-1).